The primary structure comprises 663 residues: DNA ligase (663 aa).

Residues 34 to 38 (DYEYD), 83 to 84 (SL), and glutamate 114 contribute to the NAD(+) site. The N6-AMP-lysine intermediate role is filled by lysine 116. 4 residues coordinate NAD(+): arginine 137, glutamate 171, lysine 286, and lysine 310. Zn(2+) contacts are provided by cysteine 404, cysteine 407, cysteine 422, and cysteine 427. One can recognise a BRCT domain in the interval 585–663 (TVESPLTGKN…ADEFIKLANG (79 aa)).

It belongs to the NAD-dependent DNA ligase family. LigA subfamily. Requires Mg(2+) as cofactor. The cofactor is Mn(2+).

The enzyme catalyses NAD(+) + (deoxyribonucleotide)n-3'-hydroxyl + 5'-phospho-(deoxyribonucleotide)m = (deoxyribonucleotide)n+m + AMP + beta-nicotinamide D-nucleotide.. Its function is as follows. DNA ligase that catalyzes the formation of phosphodiester linkages between 5'-phosphoryl and 3'-hydroxyl groups in double-stranded DNA using NAD as a coenzyme and as the energy source for the reaction. It is essential for DNA replication and repair of damaged DNA. The sequence is that of DNA ligase from Brachyspira hyodysenteriae (strain ATCC 49526 / WA1).